The following is a 97-amino-acid chain: Small ribosomal subunit protein bS20 (97 aa).

This sequence belongs to the bacterial ribosomal protein bS20 family.

In terms of biological role, binds directly to 16S ribosomal RNA. The sequence is that of Small ribosomal subunit protein bS20 from Prochlorococcus marinus (strain AS9601).